The primary structure comprises 678 residues: Glycine--tRNA ligase beta subunit (678 aa).

It belongs to the class-II aminoacyl-tRNA synthetase family. Tetramer of two alpha and two beta subunits.

It localises to the cytoplasm. The catalysed reaction is tRNA(Gly) + glycine + ATP = glycyl-tRNA(Gly) + AMP + diphosphate. This Streptococcus pneumoniae (strain P1031) protein is Glycine--tRNA ligase beta subunit.